A 377-amino-acid chain; its full sequence is Succinyl-diaminopimelate desuccinylase (377 aa).

Residue His-66 coordinates Zn(2+). Asp-68 is an active-site residue. Residue Asp-99 participates in Zn(2+) binding. The active-site Proton acceptor is Glu-133. Residues Glu-134, Glu-163, and His-349 each coordinate Zn(2+).

This sequence belongs to the peptidase M20A family. DapE subfamily. In terms of assembly, homodimer. Zn(2+) is required as a cofactor. It depends on Co(2+) as a cofactor.

The enzyme catalyses N-succinyl-(2S,6S)-2,6-diaminopimelate + H2O = (2S,6S)-2,6-diaminopimelate + succinate. Its pathway is amino-acid biosynthesis; L-lysine biosynthesis via DAP pathway; LL-2,6-diaminopimelate from (S)-tetrahydrodipicolinate (succinylase route): step 3/3. Its function is as follows. Catalyzes the hydrolysis of N-succinyl-L,L-diaminopimelic acid (SDAP), forming succinate and LL-2,6-diaminopimelate (DAP), an intermediate involved in the bacterial biosynthesis of lysine and meso-diaminopimelic acid, an essential component of bacterial cell walls. This Legionella pneumophila (strain Corby) protein is Succinyl-diaminopimelate desuccinylase.